A 263-amino-acid chain; its full sequence is Probable endonuclease lcl3 (263 aa).

A disordered region spans residues 1–21 (MGWLDFSSKSKKEEKDDTRPS). Residues 8–19 (SKSKKEEKDDTR) are compositionally biased toward basic and acidic residues. Residues 41–59 (TVIPTILLTTTILVSTRLY) form a helical membrane-spanning segment. The TNase-like domain maps to 80-240 (RSLFGTVTRV…KKKKLGMWSG (161 aa)). Arginine 131 is a catalytic residue. Aspartate 136 provides a ligand contact to Ca(2+). Catalysis depends on residues glutamate 139 and arginine 179. The disordered stretch occupies residues 236-263 (GMWSGKKKDYESPRDYKTRTANAAKMLK). Over residues 241–253 (KKKDYESPRDYKT) the composition is skewed to basic and acidic residues.

It belongs to the LCL3 family.

It is found in the mitochondrion. The protein localises to the membrane. The polypeptide is Probable endonuclease lcl3 (lcl3) (Botryotinia fuckeliana (strain B05.10) (Noble rot fungus)).